A 277-amino-acid polypeptide reads, in one-letter code: NLP effector protein Pc109095 (277 aa).

Positions 1-19 are cleaved as a signal peptide; sequence MKFIFAFVLCLAVAQTALG. A Hepta-peptide GHRHDWE motif motif is present at residues 119–125; it reads RSRHLWA. A glycan (N-linked (GlcNAc...) asparagine) is linked at asparagine 199.

The protein belongs to the Necrosis inducing protein (NPP1) family.

The protein resides in the secreted. Functionally, secreted effector that contributes strongly to virulence during infection by P.capsici. In Phytophthora capsici, this protein is NLP effector protein Pc109095.